We begin with the raw amino-acid sequence, 193 residues long: MYHDLIRSELNEAADTLANFLKDDDNINAIQRAAVLLADSFKAGGKVLSCGNGGSHCDAMHFAEELTGRYRENRPGYPAIAISDVSHISCVSNDFGYDYIFSRYVEAVGREGDVLLGISTSGNSGNIIKAIEAARAKGMKVITLTGKDGGKMAGSADIEIRVPHFGYADRIQEIHIKVIHILIQLIEKEMVKA.

Residues 37–193 (LADSFKAGGK…QLIEKEMVKA (157 aa)) form the SIS domain. 52 to 54 (NGG) is a substrate binding site. Residues H61 and E65 each contribute to the Zn(2+) site. Residues E65, 93-94 (ND), 119-121 (STS), S124, and Q172 each bind substrate. Q172 and H180 together coordinate Zn(2+).

Belongs to the SIS family. GmhA subfamily. In terms of assembly, homotetramer. It depends on Zn(2+) as a cofactor.

It localises to the cytoplasm. The catalysed reaction is 2 D-sedoheptulose 7-phosphate = D-glycero-alpha-D-manno-heptose 7-phosphate + D-glycero-beta-D-manno-heptose 7-phosphate. It functions in the pathway carbohydrate biosynthesis; D-glycero-D-manno-heptose 7-phosphate biosynthesis; D-glycero-alpha-D-manno-heptose 7-phosphate and D-glycero-beta-D-manno-heptose 7-phosphate from sedoheptulose 7-phosphate: step 1/1. In terms of biological role, catalyzes the isomerization of sedoheptulose 7-phosphate in D-glycero-D-manno-heptose 7-phosphate. The protein is Phosphoheptose isomerase of Yersinia enterocolitica serotype O:8 / biotype 1B (strain NCTC 13174 / 8081).